A 61-amino-acid chain; its full sequence is Insect toxin BsIT3 (61 aa).

The LCN-type CS-alpha/beta domain maps to aspartate 1–asparagine 61. 4 disulfides stabilise this stretch: cysteine 10-cysteine 60, cysteine 14-cysteine 35, cysteine 21-cysteine 42, and cysteine 25-cysteine 44.

Belongs to the long (4 C-C) scorpion toxin superfamily. Sodium channel inhibitor family. Beta subfamily. Expressed by the venom gland.

Its subcellular location is the secreted. Its function is as follows. Depressant insect beta-toxins cause a transient contraction paralysis followed by a slow flaccid paralysis. They bind voltage-independently at site-4 of sodium channels (Nav) and shift the voltage of activation toward more negative potentials thereby affecting sodium channel activation and promoting spontaneous and repetitive firing. This toxin is active only on insects. This chain is Insect toxin BsIT3, found in Hottentotta tamulus sindicus (Scorpion).